Consider the following 487-residue polypeptide: Sensor protein CopS (487 aa).

At 1–9 (MKPGSLTLR) the chain is on the periplasmic side. Residues 10–30 (LSLLFVVAVAAVLIIVGVAFN) traverse the membrane as a helical segment. Topologically, residues 31 to 136 (ELSRHHFRAL…TASVSLPTAS (106 aa)) are cytoplasmic. The chain crosses the membrane as a helical span at residues 137–157 (PPLTAWLVLDVTTHMHFFAML). Residues 158 to 159 (ER) are Periplasmic-facing. A helical transmembrane segment spans residues 160-180 (WFWGVLLASTVLSAALGWLVA). Residues 181 to 234 (KNGLRPVARVTQTAASMSAGSLKERIPLEPVPDELRALITAFNSMLGRLDDSFM) enclose the HAMP domain. Residues 181–487 (KNGLRPVARV…EHETGCHCAG (307 aa)) are Cytoplasmic-facing. A Histidine kinase domain is found at 242-455 (DIAHELRTPI…LHPHLHAIAC (214 aa)). His245 bears the Phosphohistidine; by autocatalysis mark.

It is found in the cell inner membrane. The catalysed reaction is ATP + protein L-histidine = ADP + protein N-phospho-L-histidine.. Functionally, member of the two-component regulatory system CopS/CopR. Involved in the activation of copper resistance gene operon copABCD. Specifically recognizes or transduces a signal only in response to copper. This would lead to phosphorylation of CopR in the cytoplasm. CopS/CopR may also regulate chromosomally encoded genes. May also be involved in basic copper metabolism. In Pseudomonas syringae pv. tomato, this protein is Sensor protein CopS (copS).